A 388-amino-acid chain; its full sequence is 8-amino-7-oxononanoate synthase (388 aa).

A substrate-binding site is contributed by arginine 20. 107-108 (GY) is a binding site for pyridoxal 5'-phosphate. Histidine 132 serves as a coordination point for substrate. Residues serine 178, histidine 206, and threonine 237 each contribute to the pyridoxal 5'-phosphate site. N6-(pyridoxal phosphate)lysine is present on lysine 240. Threonine 356 contributes to the substrate binding site.

It belongs to the class-II pyridoxal-phosphate-dependent aminotransferase family. BioF subfamily. As to quaternary structure, homodimer. Pyridoxal 5'-phosphate serves as cofactor.

The enzyme catalyses 6-carboxyhexanoyl-[ACP] + L-alanine + H(+) = (8S)-8-amino-7-oxononanoate + holo-[ACP] + CO2. It functions in the pathway cofactor biosynthesis; biotin biosynthesis. Functionally, catalyzes the decarboxylative condensation of pimeloyl-[acyl-carrier protein] and L-alanine to produce 8-amino-7-oxononanoate (AON), [acyl-carrier protein], and carbon dioxide. This is 8-amino-7-oxononanoate synthase from Herminiimonas arsenicoxydans.